Reading from the N-terminus, the 349-residue chain is Ferredoxin--NADP reductase 1 (349 aa).

The FAD site is built by glutamate 36, lysine 44, tyrosine 48, isoleucine 88, leucine 123, aspartate 290, and serine 331.

This sequence belongs to the ferredoxin--NADP reductase type 2 family. Homodimer. FAD serves as cofactor.

It catalyses the reaction 2 reduced [2Fe-2S]-[ferredoxin] + NADP(+) + H(+) = 2 oxidized [2Fe-2S]-[ferredoxin] + NADPH. The polypeptide is Ferredoxin--NADP reductase 1 (Bacillus thuringiensis (strain Al Hakam)).